Consider the following 180-residue polypeptide: Molybdopterin synthase catalytic subunit (180 aa).

Residues Met1–Pro10 show a composition bias toward polar residues. Positions Met1 to Leu31 are disordered. Positions Thr21–Leu31 are enriched in low complexity. Residues His131 to Arg132, Lys147, and Lys154 to Glu156 contribute to the substrate site.

It belongs to the MoaE family. MOCS2B subfamily. In terms of assembly, heterotetramer; composed of 2 small (MOCS2A) and 2 large (MOCS2B) subunits.

It is found in the cytoplasm. The enzyme catalyses 2 [molybdopterin-synthase sulfur-carrier protein]-C-terminal-Gly-aminoethanethioate + cyclic pyranopterin phosphate + H2O = molybdopterin + 2 [molybdopterin-synthase sulfur-carrier protein]-C-terminal Gly-Gly + 2 H(+). It participates in cofactor biosynthesis; molybdopterin biosynthesis. Its function is as follows. Catalytic subunit of the molybdopterin synthase complex, a complex that catalyzes the conversion of precursor Z into molybdopterin. Acts by mediating the incorporation of 2 sulfur atoms from thiocarboxylated MOCS2A into precursor Z to generate a dithiolene group. The polypeptide is Molybdopterin synthase catalytic subunit (Aspergillus niger (strain ATCC MYA-4892 / CBS 513.88 / FGSC A1513)).